The sequence spans 1137 residues: DENN domain-containing protein 2B (1137 aa).

Residues 1–12 (MTMTANKNSSIT) are compositionally biased toward polar residues. The segment at 1 to 99 (MTMTANKNSS…PTCPFKTASF (99 aa)) is disordered. 2 positions are modified to phosphoserine: Ser30 and Ser32. A compositionally biased stretch (pro residues) spans 32-43 (SPPPVLSPPRSP). The segment covering 49 to 64 (DSETSACRYPSHSSSR) has biased composition (polar residues). The span at 73–92 (PAPSPQNPQDPSPDTSPPTC) shows a compositional bias: pro residues. Thr231 carries the post-translational modification Phosphothreonine. A Phosphoserine modification is found at Ser233. The interval 293–573 (KEQPGRGLPQ…HRLPRLPKRH (281 aa)) is disordered. Low complexity predominate over residues 324–348 (EEPAGGASVSAGSRAVGVAGVAGEA). The residue at position 364 (Thr364) is a Phosphothreonine. At Ser368 the chain carries Phosphoserine. Residues 368–380 (SPSSQRLPSKSSL) are compositionally biased toward low complexity. The span at 392–402 (RTFEYEADKNP) shows a compositional bias: basic and acidic residues. The interaction with ABL1 stretch occupies residues 401-447 (NPKSKPSNGLPPSPTPAAPPPLPSTPAPPVTRRPKKDMRGHRKSQSR). Over residues 409–431 (GLPPSPTPAAPPPLPSTPAPPVT) the composition is skewed to pro residues. The segment covering 432 to 446 (RRPKKDMRGHRKSQS) has biased composition (basic residues). Residues 456–481 (SSLQSLYPSSPTENGTENQPKFGSKS) show a composition bias toward polar residues. Thr482 carries the post-translational modification Phosphothreonine. The span at 495–508 (LPKENPYEDVDLKS) shows a compositional bias: basic and acidic residues. 2 stretches are compositionally biased toward polar residues: residues 514–524 (KSQQLSENSLD) and 539–558 (SPPT…SGNW). Ser545 carries the post-translational modification Phosphoserine. The segment covering 562 to 573 (KSHRLPRLPKRH) has biased composition (basic residues). A phosphoserine mark is found at Ser574 and Ser622. The segment at 641 to 661 (IETASLRDENSESESDSDDRF) is disordered. The uDENN domain occupies 698-846 (EYFVVVSLKK…PFPAPGKTIK (149 aa)). One can recognise a cDENN domain in the interval 868-1001 (RLEHVDFECL…LQAALEQALE (134 aa)). A dDENN domain is found at 1003 to 1096 (KNELISQDSD…QDRELRKCRA (94 aa)).

Interacts with ITSN1 and GRB2. Isoform 1 interacts with the SH3 domain of ABL1. Post-translationally, phosphorylated. Phosphorylation decreases ITSN1 binding. As to expression, widely expressed with the exception of peripheral blood lymphocytes. Isoform 1 is expressed in several epithelial and fibroblast (including tumorigenic) but absent in lymphoid cell lines (at protein level). Isoform 3 is expressed in primary cell or weakly tumorigenic but not in tumorigenic cell lines (at protein level).

It localises to the cytoplasm. The protein localises to the cell cortex. Its subcellular location is the cell membrane. The protein resides in the recycling endosome. In terms of biological role, may be involved in cytoskeletal organization and tumorogenicity. Seems to be involved in a signaling transduction pathway leading to activation of MAPK1/ERK2. Plays a role in EGFR trafficking from recycling endosomes back to the cell membrane. Its function is as follows. Guanine nucleotide exchange factor (GEF) which may activate RAB9A and RAB9B. Promotes the exchange of GDP to GTP, converting inactive GDP-bound Rab proteins into their active GTP-bound form. May block ERK2 activation stimulated by ABL1. May alter cell morphology and cell growth. The sequence is that of DENN domain-containing protein 2B from Homo sapiens (Human).